The primary structure comprises 481 residues: GTPase Der (481 aa).

EngA-type G domains follow at residues 3–166 (PVVA…ESDF) and 194–367 (IKLA…MSAT). Residues 9-16 (GRPNVGKS), 56-60 (DTGGI), 118-121 (NKVD), 200-207 (GKPNVGKS), 247-251 (DTAGV), and 312-315 (NKWD) contribute to the GTP site. The KH-like domain occupies 368-452 (KRINTALLTQ…PIKIEFREGN (85 aa)).

The protein belongs to the TRAFAC class TrmE-Era-EngA-EngB-Septin-like GTPase superfamily. EngA (Der) GTPase family. As to quaternary structure, associates with the 50S ribosomal subunit.

In terms of biological role, GTPase that plays an essential role in the late steps of ribosome biogenesis. The polypeptide is GTPase Der (Alteromonas mediterranea (strain DSM 17117 / CIP 110805 / LMG 28347 / Deep ecotype)).